The primary structure comprises 263 residues: Glutathione S-transferase F8, chloroplastic (263 aa).

Residues 1 to 49 constitute a chloroplast transit peptide; the sequence is MGAIQARLPLFLSPPSIKHHTFLHSSSSNSNFKIRSNKSSSSSSSSIIM. The GST N-terminal domain maps to 50–131; that stretch reads ASIKVHGVPM…YLAEEYSEKG (82 aa). Residues 60–61, 89–90, 102–103, and 115–116 each bind glutathione; these read ST, HK, QI, and ES. The region spanning 139–263 is the GST C-terminal domain; sequence CKKVKATTNV…WAKVIDLQKQ (125 aa). Thr-177 bears the Phosphothreonine mark.

Belongs to the GST superfamily. Phi family. In terms of tissue distribution, isoform 1 is predominantly expressed in leaves and isoform 2 in roots.

The protein resides in the plastid. Its subcellular location is the chloroplast. It is found in the cytoplasm. It localises to the cytosol. It carries out the reaction RX + glutathione = an S-substituted glutathione + a halide anion + H(+). Functionally, in vitro, possesses glutathione S-transferase activity toward 1-chloro-2,4-dinitrobenzene (CDNB) and glutathione peroxidase activity toward cumene hydroperoxide and linoleic acid-13-hydroperoxide. May be involved in the conjugation of reduced glutathione to a wide number of exogenous and endogenous hydrophobic electrophiles and have a detoxification role against certain herbicides. This Arabidopsis thaliana (Mouse-ear cress) protein is Glutathione S-transferase F8, chloroplastic (GSTF8).